A 208-amino-acid polypeptide reads, in one-letter code: Glutathione S-transferase 1-1 (208 aa).

The 80-residue stretch at 1 to 80 (MDFYYLPGSA…YLVEKYGKND (80 aa)) folds into the GST N-terminal domain. Glutathione-binding positions include Ser-9, 50-52 (HTI), and 64-66 (ESR). Positions 86 to 207 (CPKKRAVINQ…EGCLEFKKFF (122 aa)) constitute a GST C-terminal domain.

The protein belongs to the GST superfamily. Theta family. In terms of assembly, homodimer.

The catalysed reaction is RX + glutathione = an S-substituted glutathione + a halide anion + H(+). Conjugation of reduced glutathione to a wide number of exogenous and endogenous hydrophobic electrophiles. This chain is Glutathione S-transferase 1-1 (GST1), found in Lucilia cuprina (Green bottle fly).